The chain runs to 323 residues: Fos-related antigen 2 (323 aa).

The span at 1–27 (MYQDYPGSFDTSSRGSSGSPGHPEPYS) shows a compositional bias: low complexity. The disordered stretch occupies residues 1–31 (MYQDYPGSFDTSSRGSSGSPGHPEPYSAGAA). The region spanning 124–187 (EEKRRIRRER…EKLEFMLVAH (64 aa)) is the bZIP domain. A basic motif region spans residues 126–128 (KRR). Positions 129-136 (IRRERNKL) are leucine-zipper. 2 disordered regions span residues 194 to 214 (SPEE…TGAS) and 288 to 323 (ESPL…LLAL). Residues 305–317 (SSSGDQSSDSLNS) are compositionally biased toward low complexity.

Belongs to the bZIP family. Fos subfamily. In terms of assembly, heterodimer with JUN.

It is found in the nucleus. In Gallus gallus (Chicken), this protein is Fos-related antigen 2 (FOSL2).